We begin with the raw amino-acid sequence, 95 residues long: Pyrimidine/purine nucleoside phosphorylase (95 aa).

The protein belongs to the nucleoside phosphorylase PpnP family.

The catalysed reaction is a purine D-ribonucleoside + phosphate = a purine nucleobase + alpha-D-ribose 1-phosphate. It carries out the reaction adenosine + phosphate = alpha-D-ribose 1-phosphate + adenine. It catalyses the reaction cytidine + phosphate = cytosine + alpha-D-ribose 1-phosphate. The enzyme catalyses guanosine + phosphate = alpha-D-ribose 1-phosphate + guanine. The catalysed reaction is inosine + phosphate = alpha-D-ribose 1-phosphate + hypoxanthine. It carries out the reaction thymidine + phosphate = 2-deoxy-alpha-D-ribose 1-phosphate + thymine. It catalyses the reaction uridine + phosphate = alpha-D-ribose 1-phosphate + uracil. The enzyme catalyses xanthosine + phosphate = alpha-D-ribose 1-phosphate + xanthine. Its function is as follows. Catalyzes the phosphorolysis of diverse nucleosides, yielding D-ribose 1-phosphate and the respective free bases. Can use uridine, adenosine, guanosine, cytidine, thymidine, inosine and xanthosine as substrates. Also catalyzes the reverse reactions. This is Pyrimidine/purine nucleoside phosphorylase from Yersinia enterocolitica serotype O:8 / biotype 1B (strain NCTC 13174 / 8081).